A 410-amino-acid polypeptide reads, in one-letter code: Demethyl-4-deoxygadusol synthase (410 aa).

Residues Asp-56–Asn-58, Glu-87–Lys-90, Gly-119–Asp-123, Thr-143–Thr-144, Lys-156, Lys-165, and Leu-183–Thr-186 contribute to the NAD(+) site. Zn(2+)-binding residues include Glu-198, His-271, and His-287.

Belongs to the sugar phosphate cyclases superfamily. DDGS family. Homodimer. Requires NAD(+) as cofactor. The cofactor is Co(2+). Zn(2+) serves as cofactor.

It carries out the reaction D-sedoheptulose 7-phosphate = (R)-demethyl-4-deoxygadusol + phosphate + H2O + H(+). Catalyzes the conversion of sedoheptulose 7-phosphate to demethyl-4-deoxygadusol (DDG). Involved in the synthesis of the mycosporine-like amino acid shinorine, a natural sunscreen compound that protects the cell against UV radiation. In Trichormus variabilis (strain ATCC 29413 / PCC 7937) (Anabaena variabilis), this protein is Demethyl-4-deoxygadusol synthase.